We begin with the raw amino-acid sequence, 474 residues long: ATP synthase subunit beta (474 aa).

Position 152 to 159 (152 to 159 (GGAGVGKT)) interacts with ATP.

The protein belongs to the ATPase alpha/beta chains family. F-type ATPases have 2 components, CF(1) - the catalytic core - and CF(0) - the membrane proton channel. CF(1) has five subunits: alpha(3), beta(3), gamma(1), delta(1), epsilon(1). CF(0) has four main subunits: a(1), b(1), b'(1) and c(9-12).

The protein localises to the cell inner membrane. The catalysed reaction is ATP + H2O + 4 H(+)(in) = ADP + phosphate + 5 H(+)(out). Its function is as follows. Produces ATP from ADP in the presence of a proton gradient across the membrane. The catalytic sites are hosted primarily by the beta subunits. This chain is ATP synthase subunit beta, found in Rhodospirillum rubrum (strain ATCC 11170 / ATH 1.1.1 / DSM 467 / LMG 4362 / NCIMB 8255 / S1).